A 124-amino-acid chain; its full sequence is Small ribosomal subunit protein uS12 (124 aa).

Aspartate 89 is subject to 3-methylthioaspartic acid. The segment at leucine 104–lysine 124 is disordered. Residues serine 113 to lysine 124 are compositionally biased toward basic residues.

This sequence belongs to the universal ribosomal protein uS12 family. Part of the 30S ribosomal subunit. Contacts proteins S8 and S17. May interact with IF1 in the 30S initiation complex.

Its function is as follows. With S4 and S5 plays an important role in translational accuracy. Interacts with and stabilizes bases of the 16S rRNA that are involved in tRNA selection in the A site and with the mRNA backbone. Located at the interface of the 30S and 50S subunits, it traverses the body of the 30S subunit contacting proteins on the other side and probably holding the rRNA structure together. The combined cluster of proteins S8, S12 and S17 appears to hold together the shoulder and platform of the 30S subunit. The protein is Small ribosomal subunit protein uS12 of Thiomonas delicata (Thiomonas cuprina).